The following is a 283-amino-acid chain: 4-diphosphocytidyl-2-C-methyl-D-erythritol kinase (283 aa).

Residue lysine 10 is part of the active site. 99-109 is a binding site for ATP; the sequence is PMGGGLGGGSS. The active site involves aspartate 141.

Belongs to the GHMP kinase family. IspE subfamily. As to quaternary structure, homodimer.

It catalyses the reaction 4-CDP-2-C-methyl-D-erythritol + ATP = 4-CDP-2-C-methyl-D-erythritol 2-phosphate + ADP + H(+). It participates in isoprenoid biosynthesis; isopentenyl diphosphate biosynthesis via DXP pathway; isopentenyl diphosphate from 1-deoxy-D-xylulose 5-phosphate: step 3/6. Catalyzes the phosphorylation of the position 2 hydroxy group of 4-diphosphocytidyl-2C-methyl-D-erythritol. This is 4-diphosphocytidyl-2-C-methyl-D-erythritol kinase from Escherichia coli (strain 55989 / EAEC).